The chain runs to 455 residues: tRNA-2-methylthio-N(6)-dimethylallyladenosine synthase (455 aa).

The region spanning 18–136 is the MTTase N-terminal domain; the sequence is KLFFIQTYGC…FPEYLNRVKT (119 aa). The [4Fe-4S] cluster site is built by cysteine 27, cysteine 63, cysteine 97, cysteine 173, cysteine 177, and cysteine 180. One can recognise a Radical SAM core domain in the interval 159–389; that stretch reads RKSDIKGFVT…VEIVNTGIAK (231 aa). In terms of domain architecture, TRAM spans 392 to 455; it reads KDAEGKIYEV…SFSLIGEVEK (64 aa).

This sequence belongs to the methylthiotransferase family. MiaB subfamily. As to quaternary structure, monomer. [4Fe-4S] cluster serves as cofactor.

It localises to the cytoplasm. The enzyme catalyses N(6)-dimethylallyladenosine(37) in tRNA + (sulfur carrier)-SH + AH2 + 2 S-adenosyl-L-methionine = 2-methylsulfanyl-N(6)-dimethylallyladenosine(37) in tRNA + (sulfur carrier)-H + 5'-deoxyadenosine + L-methionine + A + S-adenosyl-L-homocysteine + 2 H(+). Catalyzes the methylthiolation of N6-(dimethylallyl)adenosine (i(6)A), leading to the formation of 2-methylthio-N6-(dimethylallyl)adenosine (ms(2)i(6)A) at position 37 in tRNAs that read codons beginning with uridine. The sequence is that of tRNA-2-methylthio-N(6)-dimethylallyladenosine synthase from Clostridium beijerinckii (strain ATCC 51743 / NCIMB 8052) (Clostridium acetobutylicum).